We begin with the raw amino-acid sequence, 64 residues long: Translation machinery-associated protein 7 homolog (64 aa).

The tract at residues 1-64 is disordered; it reads MSGRQGGKAK…GGGIKKSGKK (64 aa). A coiled-coil region spans residues 21–50; it reads DLSEEDVEFKKKQQEEAKKIKEMAAKAGQR. Residues 28-44 show a composition bias toward basic and acidic residues; it reads EFKKKQQEEAKKIKEMA. Residues 53-64 show a composition bias toward gly residues; the sequence is LLGGGIKKSGKK.

It belongs to the TMA7 family.

This is Translation machinery-associated protein 7 homolog from Caenorhabditis elegans.